Here is a 537-residue protein sequence, read N- to C-terminus: P2Y purinoceptor 4 (537 aa).

Residues 1–49 are Extracellular-facing; it reads MTEDIMATSYPTFLTTPYLPMKLLMNLTNDTEDICVFDEGFKFLLLPVS. Residues Asn26 and Asn29 are each glycosylated (N-linked (GlcNAc...) asparagine). The helical transmembrane segment at 50–70 threads the bilayer; sequence YSAVFMVGLPLNIAAMWIFIA. Topologically, residues 71–79 are cytoplasmic; it reads KMRPWNPTT. The helical transmembrane segment at 80–100 threads the bilayer; the sequence is VYMFNLALSDTLYVLSLPTLV. Topologically, residues 101-118 are extracellular; sequence YYYADKNNWPFGEVLCKL. An intrachain disulfide couples Cys116 to Cys193. Residues 119–139 traverse the membrane as a helical segment; that stretch reads VRFLFYANLYSSILFLTCISV. Residues 140 to 161 are Cytoplasmic-facing; it reads HRYRGVCHPITSLRRMNAKHAY. Residues 162-182 form a helical membrane-spanning segment; the sequence is VICALVWLSVTLCLVPNLIFV. Residues 183-210 lie on the Extracellular side of the membrane; it reads TVSPKVKNTICHDTTRPEDFARYVEYST. Residues 211-231 form a helical membrane-spanning segment; that stretch reads AIMCLLFGIPCLIIAGCYGLM. Residues 232–254 lie on the Cytoplasmic side of the membrane; the sequence is TRELMKPIVSGNQQTLPSYKKRS. The chain crosses the membrane as a helical span at residues 255 to 275; that stretch reads IKTIIFVMIAFAICFMPFHIT. Topologically, residues 276–292 are extracellular; the sequence is RTLYYYARLLGIKCYAL. Residues 293–316 traverse the membrane as a helical segment; the sequence is NVINVTYKVTRPLASANSCIDPIL. Residues 317–537 lie on the Cytoplasmic side of the membrane; it reads YFLANDRYRR…EKELQNFPKA (221 aa). The tract at residues 401 to 505 is disordered; sequence NRRSTIKRNS…GEGTSTWNLL (105 aa). Composition is skewed to basic and acidic residues over residues 409 to 423 and 431 to 447; these read NSTD…RHGE and VVEK…RKTT. Over residues 448-465 the composition is skewed to polar residues; the sequence is EQSSKTNAEQDELQTQID.

It belongs to the G-protein coupled receptor 1 family.

It localises to the cell membrane. Functionally, receptor for extracellular ATP, UTP, CTP, GTP and ITP. The activity of this receptor is mediated by G proteins which activate a phosphatidylinositol-calcium second messenger system. May play a key role in the early development of neural tissue. The chain is P2Y purinoceptor 4 (p2ry4) from Xenopus laevis (African clawed frog).